Consider the following 606-residue polypeptide: Sodium-independent sulfate anion transporter (606 aa).

The Extracellular segment spans residues 1 to 51; it reads MPSSVTALGQARSSGPGMAPSACCCSPAALQRRLPILAWLPSYSLQWLKMD. The chain crosses the membrane as a helical span at residues 52 to 72; the sequence is FVAGLSVGLTAIPQALAYAEV. Residue Ala73 is a topological domain, cytoplasmic. Residues 74–94 form a helical membrane-spanning segment; sequence GLPPQYGLYSAFMGCFVYFFL. The Extracellular segment spans residues 95–100; sequence GTSRDV. Residues 101-117 traverse the membrane as a helical segment; it reads TLGPTAIMSLLVSFYTF. The Cytoplasmic segment spans residues 118-119; that stretch reads HE. Residues 120–140 form a helical membrane-spanning segment; the sequence is PAYAVLLAFLSGCIQLAMGVL. Topologically, residues 141 to 147 are extracellular; it reads RLGFLLD. A helical membrane pass occupies residues 148–168; that stretch reads FISYPVIKGFTSAAAVTIGFG. Residues 169 to 197 are Cytoplasmic-facing; it reads QIKNLLGLQNIPRPFFLQVYHTFLRIAET. Residues 198–218 traverse the membrane as a helical segment; sequence RVGDAVLGLVCMLLLLVLKLM. Topologically, residues 219 to 250 are extracellular; sequence RDHVPPVHPEMPPGVRLSRGLVWAATTARNAL. Residues 251–271 form a helical membrane-spanning segment; sequence VVSFAALVAYSFEVTGYQPFI. Topologically, residues 272-307 are cytoplasmic; it reads LTGETAEGLPPVRIPPFSVTTANGTISFTEMVQDMG. The chain crosses the membrane as a helical span at residues 308–328; the sequence is AGLAVVPLMGLLESIAVAKAF. Residues 329-341 are Extracellular-facing; that stretch reads ASQNNYRIDANQE. The chain crosses the membrane as a helical span at residues 342–362; the sequence is LLAIGLTNMLGSLVSSYPVTG. At 363 to 374 the chain is on the cytoplasmic side; sequence SFGRTAVNAQSG. Residues 375-395 traverse the membrane as a helical segment; the sequence is VCTPAGGLVTGVLVLLSLDYL. Topologically, residues 396-398 are extracellular; sequence TSL. A helical transmembrane segment spans residues 399 to 419; sequence FYYIPKSALAAVIIMAVAPLF. Topologically, residues 420–441 are cytoplasmic; the sequence is DTKIFRTLWRVKRLDLLPLCVT. Residues 442 to 462 traverse the membrane as a helical segment; sequence FLLCFWEVQYGILAGALVSLL. Topologically, residues 463–606 are extracellular; the sequence is MLLHSAARPE…LDQKVALLKA (144 aa). One can recognise an STAS domain in the interval 470 to 584; the sequence is RPETKVSEGP…EAEKHLRQEP (115 aa).

It belongs to the SLC26A/SulP transporter (TC 2.A.53) family. Detected in all tissues tested with highest expression observed in brain, kidney, HEVEC and placenta and lowest in pancreas, skeletal muscle, liver, lung and heart.

The protein resides in the cell membrane. The protein localises to the lysosome membrane. It is found in the apical cell membrane. It localises to the basolateral cell membrane. It catalyses the reaction hydrogencarbonate(in) + chloride(out) = hydrogencarbonate(out) + chloride(in). The enzyme catalyses sulfate(in) + H(+)(in) = sulfate(out) + H(+)(out). The catalysed reaction is oxalate(in) + chloride(out) = oxalate(out) + chloride(in). Its function is as follows. Sodium-independent anion exchanger mediating bicarbonate, chloride, sulfate and oxalate transport. Exhibits sodium-independent sulfate anion transporter activity that may cooperate with SLC26A2 to mediate DIDS-sensitive sulfate uptake into high endothelial venules endothelial cells (HEVEC). In the kidney, mediates chloride-bicarbonate exchange, facilitating V-ATPase-mediated acid secretion. May function as a chloride channel, playing an important role in moderating chloride homeostasis and neuronal activity in the cerebellum. This chain is Sodium-independent sulfate anion transporter, found in Homo sapiens (Human).